The following is a 302-amino-acid chain: Glutaminase (302 aa).

Substrate contacts are provided by Ser61, Asn111, Glu155, Asn162, Tyr186, Tyr238, and Val256.

It belongs to the glutaminase family. In terms of assembly, homotetramer.

The catalysed reaction is L-glutamine + H2O = L-glutamate + NH4(+). The polypeptide is Glutaminase (Stutzerimonas stutzeri (strain A1501) (Pseudomonas stutzeri)).